A 272-amino-acid chain; its full sequence is ATP-dependent Clp protease proteolytic subunit, mitochondrial (272 aa).

A mitochondrion-targeting transit peptide spans 1-52 (MWPRVLLGEARVAVDGCRALLSRLAVHFSPPWTAVSCSPLRRSLHGTATRAF). Ser-149 functions as the Nucleophile in the catalytic mechanism. The active site involves His-174. N6-succinyllysine is present on Lys-196. Position 207 is an N6-acetyllysine (Lys-207). Residues 240-272 (VLVHPPQDGEDEPELVQKETATAPTDPPAPTST) are disordered.

The protein belongs to the peptidase S14 family. As to quaternary structure, fourteen CLPP subunits assemble into 2 heptameric rings which stack back to back to give a disk-like structure with a central cavity. Component of the ClpXP complex formed by the assembly of two CLPP heptameric rings with two CLPX hexameric rings, giving rise to a symmetrical structure with two central CLPP rings flanked by a CLPX ring at either end of the complex. Detected in liver (at protein level). High levels found in heart, liver and skeletal muscle.

Its subcellular location is the mitochondrion matrix. The catalysed reaction is Hydrolysis of proteins to small peptides in the presence of ATP and magnesium. alpha-casein is the usual test substrate. In the absence of ATP, only oligopeptides shorter than five residues are hydrolyzed (such as succinyl-Leu-Tyr-|-NHMec, and Leu-Tyr-Leu-|-Tyr-Trp, in which cleavage of the -Tyr-|-Leu- and -Tyr-|-Trp bonds also occurs).. Protease component of the ClpXP complex that cleaves peptides and various proteins in an ATP-dependent process. Has low peptidase activity in the absence of CLPX. The ClpXP complex can degrade CSN1S1, CSN2 and CSN3, as well as synthetic peptides (in vitro) and may be responsible for a fairly general and central housekeeping function rather than for the degradation of specific substrates. Cleaves PINK1 in the mitochondrion. The polypeptide is ATP-dependent Clp protease proteolytic subunit, mitochondrial (Mus musculus (Mouse)).